Reading from the N-terminus, the 316-residue chain is Pantothenate kinase (316 aa).

95–102 contacts ATP; that stretch reads GSVAVGKS.

This sequence belongs to the prokaryotic pantothenate kinase family.

It is found in the cytoplasm. The enzyme catalyses (R)-pantothenate + ATP = (R)-4'-phosphopantothenate + ADP + H(+). The protein operates within cofactor biosynthesis; coenzyme A biosynthesis; CoA from (R)-pantothenate: step 1/5. The protein is Pantothenate kinase of Shigella boydii serotype 18 (strain CDC 3083-94 / BS512).